The following is a 294-amino-acid chain: tRNA dimethylallyltransferase (294 aa).

Residue 10–17 participates in ATP binding; sequence GPTAVGKT. 12 to 17 contributes to the substrate binding site; it reads TAVGKT. Positions 35-38 are interaction with substrate tRNA; sequence DSQQ.

The protein belongs to the IPP transferase family. As to quaternary structure, monomer. Mg(2+) serves as cofactor.

The enzyme catalyses adenosine(37) in tRNA + dimethylallyl diphosphate = N(6)-dimethylallyladenosine(37) in tRNA + diphosphate. In terms of biological role, catalyzes the transfer of a dimethylallyl group onto the adenine at position 37 in tRNAs that read codons beginning with uridine, leading to the formation of N6-(dimethylallyl)adenosine (i(6)A). This is tRNA dimethylallyltransferase from Streptococcus pneumoniae (strain P1031).